The chain runs to 352 residues: C-C chemokine receptor type 5 (352 aa).

Residues 1–30 (MDYQVSSPTYDIDYYTSEPCQKVNVKQIAA) lie on the Extracellular side of the membrane. At Tyr-3 the chain carries Sulfotyrosine. O-linked (GalNAc...) serine glycans are attached at residues Ser-6 and Ser-7. Tyr-10, Tyr-14, and Tyr-15 each carry sulfotyrosine. Cystine bridges form between Cys-20–Cys-269 and Cys-101–Cys-178. The chain crosses the membrane as a helical span at residues 31-58 (RLLPPLYSLVFIFGFVGNILVVLILINC). Topologically, residues 59 to 68 (KRLKSMTDIY) are cytoplasmic. Residues 69 to 89 (LLNLAISDLFFLLTVPFWAHY) form a helical membrane-spanning segment. Residues 90-102 (AAAQWDFGNTMCQ) are Extracellular-facing. The chain crosses the membrane as a helical span at residues 103-124 (LLTGLYFIGFFSGIFFIILLTI). Residues 125-141 (DRYLAIVHAVFALKART) are Cytoplasmic-facing. Residues 142–166 (VTFGVVTSVITWVVAVFASLPGIIF) form a helical membrane-spanning segment. Over 167–198 (TRSQREGVHYTCSSHFPYSQYQFWKNFQTLKI) the chain is Extracellular. Residues 199-218 (VILGLVLPLLVMVICYSGIL) traverse the membrane as a helical segment. Over 219–235 (KTLLRCRNEKKRHRAVR) the chain is Cytoplasmic. The helical transmembrane segment at 236–260 (LIFTIMIVYFLFWAPYNIVLLLNTF) threads the bilayer. Topologically, residues 261 to 277 (QEFFGLNNCSSSNRLDQ) are extracellular. Residues 278–301 (AMQVTETLGMTHCCINPIIYAFVG) form a helical membrane-spanning segment. At 302 to 352 (EKFRNYLLVFFQKHIAKRFCKCCSIFQQEAPERASSVYTRSTGEQETSVGL) the chain is on the cytoplasmic side. S-palmitoyl cysteine attachment occurs at residues Cys-321, Cys-323, and Cys-324. Phosphoserine; by BARK1 occurs at positions 336, 337, 342, and 349.

This sequence belongs to the G-protein coupled receptor 1 family. As to quaternary structure, interacts with PRAF2. Efficient ligand binding to CCL3/MIP-1alpha and CCL4/MIP-1beta requires sulfation, O-glycosylation and sialic acid modifications. Glycosylation on Ser-6 is required for efficient binding of CCL4. Interacts with GRK2. Interacts with ARRB1 and ARRB2. Interacts with CNIH4. Interacts with S100A4; this interaction stimulates T-lymphocyte chemotaxis. Sulfated on at least 2 of the N-terminal tyrosines. Sulfation is required for efficient binding of the chemokines, CCL3 and CCL4. In terms of processing, palmitoylation in the C-terminal is important for cell surface expression. Post-translationally, phosphorylation on serine residues in the C-terminal is stimulated by binding CC chemokines especially by APO-RANTES. O-glycosylated, but not N-glycosylated. Ser-6 appears to be the major site even if Ser-7 may be also O-glycosylated. Also sialylated glycans present which contribute to chemokine binding. Thr-16 and Ser-17 may also be glycosylated and, if so, with small moieties such as a T-antigen.

Its subcellular location is the cell membrane. Receptor for a number of inflammatory CC-chemokines including CCL3/MIP-1-alpha, CCL4/MIP-1-beta and RANTES and subsequently transduces a signal by increasing the intracellular calcium ion level. May play a role in the control of granulocytic lineage proliferation or differentiation. Participates in T-lymphocyte migration to the infection site by acting as a chemotactic receptor. The sequence is that of C-C chemokine receptor type 5 (CCR5) from Rhinopithecus avunculus (Tonkin snub-nosed monkey).